The primary structure comprises 111 residues: Cell cycle protein GpsB (111 aa).

The stretch at 32–63 (LDDIMKDYDAYEAIIKELKGEIARLKAQAANS) forms a coiled coil. The disordered stretch occupies residues 59 to 80 (QAANSPKTTLPTEESNDVLRTE). Residues 60-71 (AANSPKTTLPTE) show a composition bias toward polar residues.

It belongs to the GpsB family. Forms polymers through the coiled coil domains. Interacts with PBP1, MreC and EzrA.

It localises to the cytoplasm. Functionally, divisome component that associates with the complex late in its assembly, after the Z-ring is formed, and is dependent on DivIC and PBP2B for its recruitment to the divisome. Together with EzrA, is a key component of the system that regulates PBP1 localization during cell cycle progression. Its main role could be the removal of PBP1 from the cell pole after pole maturation is completed. Also contributes to the recruitment of PBP1 to the division complex. Not essential for septum formation. In Streptococcus suis (strain 98HAH33), this protein is Cell cycle protein GpsB.